Here is a 203-residue protein sequence, read N- to C-terminus: Orotate phosphoribosyltransferase (203 aa).

5-phospho-alpha-D-ribose 1-diphosphate-binding positions include arginine 94, lysine 98, histidine 100, and 120-128 (EDLISTGGS). Residue serine 124 participates in orotate binding.

This sequence belongs to the purine/pyrimidine phosphoribosyltransferase family. PyrE subfamily. As to quaternary structure, homodimer. It depends on Mg(2+) as a cofactor.

It catalyses the reaction orotidine 5'-phosphate + diphosphate = orotate + 5-phospho-alpha-D-ribose 1-diphosphate. It participates in pyrimidine metabolism; UMP biosynthesis via de novo pathway; UMP from orotate: step 1/2. Functionally, catalyzes the transfer of a ribosyl phosphate group from 5-phosphoribose 1-diphosphate to orotate, leading to the formation of orotidine monophosphate (OMP). This is Orotate phosphoribosyltransferase from Staphylococcus aureus (strain COL).